The sequence spans 382 residues: S-adenosylmethionine synthase (382 aa).

Position 15 (histidine 15) interacts with ATP. A Mg(2+)-binding site is contributed by aspartate 17. Glutamate 43 is a binding site for K(+). L-methionine is bound by residues glutamate 56 and glutamine 99. The interval 99–109 (QSPDINQGVDR) is flexible loop. ATP-binding positions include 164-166 (DAK), 230-231 (RF), aspartate 239, 245-246 (RK), alanine 262, and lysine 266. L-methionine is bound at residue aspartate 239. Lysine 270 is a binding site for L-methionine.

It belongs to the AdoMet synthase family. Homotetramer; dimer of dimers. Mg(2+) serves as cofactor. K(+) is required as a cofactor.

Its subcellular location is the cytoplasm. It carries out the reaction L-methionine + ATP + H2O = S-adenosyl-L-methionine + phosphate + diphosphate. It functions in the pathway amino-acid biosynthesis; S-adenosyl-L-methionine biosynthesis; S-adenosyl-L-methionine from L-methionine: step 1/1. Functionally, catalyzes the formation of S-adenosylmethionine (AdoMet) from methionine and ATP. The overall synthetic reaction is composed of two sequential steps, AdoMet formation and the subsequent tripolyphosphate hydrolysis which occurs prior to release of AdoMet from the enzyme. The protein is S-adenosylmethionine synthase of Glaesserella parasuis serovar 5 (strain SH0165) (Haemophilus parasuis).